The following is a 50-amino-acid chain: Large ribosomal subunit protein eL39 (50 aa).

Belongs to the eukaryotic ribosomal protein eL39 family.

This is Large ribosomal subunit protein eL39 from Methanosphaerula palustris (strain ATCC BAA-1556 / DSM 19958 / E1-9c).